Consider the following 257-residue polypeptide: NAD-capped RNA hydrolase NudC (257 aa).

Substrate is bound by residues lysine 25 and arginine 69. Zn(2+)-binding residues include cysteine 98 and cysteine 101. Position 111 (glutamate 111) interacts with substrate. The Zn(2+) site is built by cysteine 116 and cysteine 119. Tyrosine 124 is a substrate binding site. The 124-residue stretch at 125 to 248 (PQIAPCIIVA…TVARRLIEDT (124 aa)) folds into the Nudix hydrolase domain. Residues alanine 158, glutamate 174, and glutamate 178 each coordinate a divalent metal cation. Residues 159-180 (GFVEVGETLEQAVAREVMEESG) carry the Nudix box motif. 192-199 (QPWPFPQS) lines the substrate pocket. Glutamate 219 provides a ligand contact to a divalent metal cation. Alanine 241 contacts substrate.

The protein belongs to the Nudix hydrolase family. NudC subfamily. Homodimer. It depends on Mg(2+) as a cofactor. The cofactor is Mn(2+). Zn(2+) serves as cofactor.

It catalyses the reaction a 5'-end NAD(+)-phospho-ribonucleoside in mRNA + H2O = a 5'-end phospho-adenosine-phospho-ribonucleoside in mRNA + beta-nicotinamide D-ribonucleotide + 2 H(+). It carries out the reaction NAD(+) + H2O = beta-nicotinamide D-ribonucleotide + AMP + 2 H(+). The catalysed reaction is NADH + H2O = reduced beta-nicotinamide D-ribonucleotide + AMP + 2 H(+). Its function is as follows. mRNA decapping enzyme that specifically removes the nicotinamide adenine dinucleotide (NAD) cap from a subset of mRNAs by hydrolyzing the diphosphate linkage to produce nicotinamide mononucleotide (NMN) and 5' monophosphate mRNA. The NAD-cap is present at the 5'-end of some mRNAs and stabilizes RNA against 5'-processing. Has preference for mRNAs with a 5'-end purine. Catalyzes the hydrolysis of a broad range of dinucleotide pyrophosphates. The sequence is that of NAD-capped RNA hydrolase NudC from Escherichia coli O45:K1 (strain S88 / ExPEC).